We begin with the raw amino-acid sequence, 968 residues long: uncharacterized protein (968 aa).

The N-terminal stretch at 1–27 is a signal peptide; that stretch reads MHSWKKKLVVSQLALACTLAITSQANA. The 266-residue stretch at 703–968 folds into the Autotransporter domain; the sequence is GLADNGGAWV…SANVGVKYTW (266 aa).

This is an uncharacterized protein from Escherichia coli (strain K12).